Reading from the N-terminus, the 774-residue chain is Transcription factor MBS1 (774 aa).

Residues 37–143 (EITFYDSGVP…YVPTSVSPPP (107 aa)) form the HTH APSES-type domain. Positions 68-89 (ATQILKVAGFDKPQRTRVLERE) form a DNA-binding region, H-T-H motif. Disordered regions lie at residues 135 to 180 (VPTS…SAAA) and 209 to 229 (RVSLTPEDDSSSDTPSPVASV). Over residues 155–165 (ARRDKEKETGR) the composition is skewed to basic and acidic residues. The segment covering 166 to 176 (TKATPSRTGPT) has biased composition (polar residues). 2 ANK repeats span residues 348 to 377 (DGHTALHWACAMGRVRVVKLLLTAGASIFA) and 467 to 496 (EGETALTIAARARSRRLVKALLDHGANPKI). The disordered stretch occupies residues 752-774 (EEENDNQVYNTSAGESGPSSWVQ). Positions 757 to 774 (NQVYNTSAGESGPSSWVQ) are enriched in polar residues.

The protein resides in the nucleus. Its function is as follows. Transcription factor that positively regulates ergosterol biosynthesis and thereby affects polyene and azole drug susceptibility. Plays a role in maintenance of membrane stability and osmotic stress response. Involved in genotoxic and oxidative stress responses. Also promotes production of melanin and capsule and thereby is required for full virulence. The protein is Transcription factor MBS1 of Cryptococcus neoformans var. grubii serotype A (strain H99 / ATCC 208821 / CBS 10515 / FGSC 9487) (Filobasidiella neoformans var. grubii).